Consider the following 68-residue polypeptide: Probable tautomerase Cj0270 (68 aa).

The active-site Proton acceptor; via imino nitrogen is the proline 2.

It belongs to the 4-oxalocrotonate tautomerase family.

In Campylobacter jejuni subsp. jejuni serotype O:2 (strain ATCC 700819 / NCTC 11168), this protein is Probable tautomerase Cj0270.